We begin with the raw amino-acid sequence, 81 residues long: uncharacterized protein (81 aa).

Residue Lys5 forms a Glycyl lysine isopeptide (Lys-Gly) (interchain with G-Cter in host protein DncV) linkage.

Cross-linked via an isopeptide bond to E.coli host protein DncV during infection.

This is an uncharacterized protein from Enterobacteria phage T4 (Bacteriophage T4).